The chain runs to 166 residues: Interferon gamma (166 aa).

An N-terminal signal peptide occupies residues M1 to G23. Q24 bears the Pyrrolidone carboxylic acid mark. Residues N39 and N106 are each glycosylated (N-linked (GlcNAc...) asparagine).

This sequence belongs to the type II (or gamma) interferon family. Homodimer. Interacts with IFNGR1 (via extracellular domain); this interaction promotes IFNGR1 dimerization. In terms of tissue distribution, released primarily from activated T lymphocytes.

It localises to the secreted. Type II interferon produced by immune cells such as T-cells and NK cells that plays crucial roles in antimicrobial, antiviral, and antitumor responses by activating effector immune cells and enhancing antigen presentation. Primarily signals through the JAK-STAT pathway after interaction with its receptor IFNGR1 to affect gene regulation. Upon IFNG binding, IFNGR1 intracellular domain opens out to allow association of downstream signaling components JAK2, JAK1 and STAT1, leading to STAT1 activation, nuclear translocation and transcription of IFNG-regulated genes. Many of the induced genes are transcription factors such as IRF1 that are able to further drive regulation of a next wave of transcription. Plays a role in class I antigen presentation pathway by inducing a replacement of catalytic proteasome subunits with immunoproteasome subunits. In turn, increases the quantity, quality, and repertoire of peptides for class I MHC loading. Increases the efficiency of peptide generation also by inducing the expression of activator PA28 that associates with the proteasome and alters its proteolytic cleavage preference. Up-regulates as well MHC II complexes on the cell surface by promoting expression of several key molecules such as cathepsins B/CTSB, H/CTSH, and L/CTSL. Participates in the regulation of hematopoietic stem cells during development and under homeostatic conditions by affecting their development, quiescence, and differentiation. This is Interferon gamma (IFNG) from Ovis aries (Sheep).